The following is a 334-amino-acid chain: Ornithine carbamoyltransferase (334 aa).

Carbamoyl phosphate-binding positions include 56–59 (STRT), Q83, R107, and 134–137 (HPTQ). L-ornithine is bound by residues N168, D232, and 236–237 (SM). Residues 274-275 (CL) and R320 contribute to the carbamoyl phosphate site.

Belongs to the aspartate/ornithine carbamoyltransferase superfamily. OTCase family. Homotrimer.

The protein resides in the cytoplasm. The enzyme catalyses carbamoyl phosphate + L-ornithine = L-citrulline + phosphate + H(+). It functions in the pathway amino-acid biosynthesis; L-arginine biosynthesis; L-arginine from L-ornithine and carbamoyl phosphate: step 1/3. Functionally, reversibly catalyzes the transfer of the carbamoyl group from carbamoyl phosphate (CP) to the N(epsilon) atom of ornithine (ORN) to produce L-citrulline. In Salmonella typhimurium (strain LT2 / SGSC1412 / ATCC 700720), this protein is Ornithine carbamoyltransferase (argI).